A 579-amino-acid polypeptide reads, in one-letter code: Isocitrate dehydrogenase kinase/phosphatase (579 aa).

Residues 324–330 (ADGTPGM) and lysine 345 each bind ATP. Residue aspartate 380 is part of the active site.

The protein belongs to the AceK family.

It localises to the cytoplasm. It catalyses the reaction L-seryl-[isocitrate dehydrogenase] + ATP = O-phospho-L-seryl-[isocitrate dehydrogenase] + ADP + H(+). Functionally, bifunctional enzyme which can phosphorylate or dephosphorylate isocitrate dehydrogenase (IDH) on a specific serine residue. This is a regulatory mechanism which enables bacteria to bypass the Krebs cycle via the glyoxylate shunt in response to the source of carbon. When bacteria are grown on glucose, IDH is fully active and unphosphorylated, but when grown on acetate or ethanol, the activity of IDH declines drastically concomitant with its phosphorylation. This chain is Isocitrate dehydrogenase kinase/phosphatase, found in Xanthomonas euvesicatoria pv. vesicatoria (strain 85-10) (Xanthomonas campestris pv. vesicatoria).